We begin with the raw amino-acid sequence, 710 residues long: Polyribonucleotide nucleotidyltransferase (710 aa).

Positions 491 and 497 each coordinate Mg(2+). The KH domain occupies 559–618 (PRLITIKINPEKIRDVIGKGGAVIRALTEETGTQIDISDEGVVTIASVDAAAGQEAKRRI). The S1 motif domain maps to 628–696 (GKVYEGTVLK…DRGRLKLSMK (69 aa)).

It belongs to the polyribonucleotide nucleotidyltransferase family. Requires Mg(2+) as cofactor.

It localises to the cytoplasm. The catalysed reaction is RNA(n+1) + phosphate = RNA(n) + a ribonucleoside 5'-diphosphate. In terms of biological role, involved in mRNA degradation. Catalyzes the phosphorolysis of single-stranded polyribonucleotides processively in the 3'- to 5'-direction. This is Polyribonucleotide nucleotidyltransferase from Herminiimonas arsenicoxydans.